Reading from the N-terminus, the 192-residue chain is Ion-translocating oxidoreductase complex subunit B (192 aa).

The tract at residues 1–26 (MNAIWIAVAAVSLLGLAFGAILGYAS) is hydrophobic. Residues 32–91 (EDDPVVEKIDEILPQSQCGQCGYPGCRPYAEAISCNGEKINRCAPGGEAVMLKIAELLNV) form the 4Fe-4S domain. Residues C49, C52, C57, C74, C117, C120, C123, C127, C147, C150, C153, and C157 each coordinate [4Fe-4S] cluster. 2 4Fe-4S ferredoxin-type domains span residues 108 to 137 (MVAVIDENNCIGCTKCIQACPVDAIVGATR) and 138 to 167 (AMHTVMSDLCTGCNLCVDPCPTHCISLQPV).

This sequence belongs to the 4Fe4S bacterial-type ferredoxin family. RnfB subfamily. As to quaternary structure, the complex is composed of six subunits: RsxA, RsxB, RsxC, RsxD, RsxE and RsxG. Requires [4Fe-4S] cluster as cofactor.

The protein resides in the cell inner membrane. In terms of biological role, part of a membrane-bound complex that couples electron transfer with translocation of ions across the membrane. Required to maintain the reduced state of SoxR. The polypeptide is Ion-translocating oxidoreductase complex subunit B (Escherichia coli O139:H28 (strain E24377A / ETEC)).